The primary structure comprises 1168 residues: Carboxylic acid reductase (1168 aa).

AMP is bound by residues H290, S385, 407–408 (EG), T412, D485, 497–500 (YLDR), K506, and K606. Residues 645–720 (APVLPTLCRA…ALADHIEAAR (76 aa)) form the Carrier domain. S679 bears the O-(pantetheine 4'-phosphoryl)serine mark. NADP(+) contacts are provided by residues 777–780 (TGFL), R804, R814, 844–845 (DK), 870–872 (PAA), S910, Y946, and K950.

The protein belongs to the ATP-dependent AMP-binding enzyme family. Carboxylic acid reductase subfamily. Requires pantetheine 4'-phosphate as cofactor.

The catalysed reaction is a carboxylate + ATP + NADPH + H(+) = an aldehyde + AMP + diphosphate + NADP(+). It catalyses the reaction a medium-chain fatty acid + ATP + H(+) = a medium-chain fatty acyl-AMP + diphosphate. The enzyme catalyses a long-chain fatty acid + ATP + H(+) = a long-chain fatty acyl-AMP + diphosphate. It carries out the reaction dodecanoate + ATP + H(+) = dodecanoyl-AMP + diphosphate. The catalysed reaction is hexadecanoate + ATP + H(+) = hexadecanoyl-AMP + diphosphate. Its function is as follows. Catalyzes the ATP- and NADPH-dependent reduction of carboxylic acids to the corresponding aldehydes. In vitro, also catalyzes the activation of medium/long-chain fatty acids as acyl-adenylates (acyl-AMP). The protein is Carboxylic acid reductase of Mycobacterium tuberculosis (strain ATCC 25618 / H37Rv).